A 329-amino-acid chain; its full sequence is MTEFIFLLVVIGLIFVFLSVILSFIPLGLWISALAAGVKIGIFTLVGMRLRRVPPDKIVKPLIKAIKAGQDVEINKLEAHYLAGGNVDKVIDALIAAQRANISLEFERAAAIDLAGRDVLHAVQMSVNPKVIETPVVAAVAKDGIEVKVKARVTVRANIDRLVGGAGEETIIARVGEGIVTTVGSSNSHKEVLENPDSISRTVLNKGLDAGTAFEILSIDIADVDVGRNIGARLQIDQAEADKRIAQAKAEERRAMAVAREQEMKAMVQEMRAKVVEAEAEVPKAMAEALRTGKIGVMDYYNMRNVIADTMMRESFSKLGQERQQEEKE.

Helical transmembrane passes span 5 to 25 and 27 to 47; these read IFLL…LSFI and LGLW…TLVG.

It belongs to the flotillin-like FloA family. Homooligomerizes.

It is found in the cell membrane. The protein resides in the membrane raft. In terms of biological role, found in functional membrane microdomains (FMM) that may be equivalent to eukaryotic membrane rafts. FMMs are highly dynamic and increase in number as cells age. Flotillins are thought to be important factors in membrane fluidity. The protein is Flotillin-like protein FloA of Thermoanaerobacter sp. (strain X514).